The following is a 73-amino-acid chain: Large ribosomal subunit protein bL31 (73 aa).

Zn(2+)-binding residues include C16, C18, C38, and C41.

Belongs to the bacterial ribosomal protein bL31 family. Type A subfamily. As to quaternary structure, part of the 50S ribosomal subunit. It depends on Zn(2+) as a cofactor.

Its function is as follows. Binds the 23S rRNA. The polypeptide is Large ribosomal subunit protein bL31 (Streptomyces avermitilis (strain ATCC 31267 / DSM 46492 / JCM 5070 / NBRC 14893 / NCIMB 12804 / NRRL 8165 / MA-4680)).